We begin with the raw amino-acid sequence, 122 residues long: Large ribosomal subunit protein uL14c (122 aa).

The protein belongs to the universal ribosomal protein uL14 family. In terms of assembly, part of the 50S ribosomal subunit.

It localises to the plastid. The protein resides in the chloroplast. In terms of biological role, binds to 23S rRNA. This Pinus koraiensis (Korean pine) protein is Large ribosomal subunit protein uL14c.